The following is a 436-amino-acid chain: GTPase Der (436 aa).

2 EngA-type G domains span residues 4–167 (PTIA…PNEE) and 175–351 (IKFS…QSQN). Residues 10–17 (GRPNVGKS), 57–61 (DTGGI), 119–122 (NKVD), 181–188 (GRPNVGKS), 229–233 (DTAGM), and 294–297 (NKWD) each bind GTP. The KH-like domain occupies 352 to 436 (TRIPSAVLND…PIHLIARKRK (85 aa)).

The protein belongs to the TRAFAC class TrmE-Era-EngA-EngB-Septin-like GTPase superfamily. EngA (Der) GTPase family. As to quaternary structure, associates with the 50S ribosomal subunit.

In terms of biological role, GTPase that plays an essential role in the late steps of ribosome biogenesis. The sequence is that of GTPase Der from Streptococcus gordonii (strain Challis / ATCC 35105 / BCRC 15272 / CH1 / DL1 / V288).